A 469-amino-acid chain; its full sequence is Trigger factor (469 aa).

The region spanning 165 to 250 is the PPIase FKBP-type domain; that stretch reads GDRVTIDYIG…VKAVCKSDEL (86 aa). A compositionally biased stretch (basic and acidic residues) spans 444-460; that stretch reads DLTEKKPLKKKTAEKVS. Residues 444-469 are disordered; it reads DLTEKKPLKKKTAEKVSTKKKAPKKS.

It belongs to the FKBP-type PPIase family. Tig subfamily.

It localises to the cytoplasm. The catalysed reaction is [protein]-peptidylproline (omega=180) = [protein]-peptidylproline (omega=0). In terms of biological role, involved in protein export. Acts as a chaperone by maintaining the newly synthesized protein in an open conformation. Functions as a peptidyl-prolyl cis-trans isomerase. The protein is Trigger factor of Bartonella henselae (strain ATCC 49882 / DSM 28221 / CCUG 30454 / Houston 1) (Rochalimaea henselae).